The following is a 221-amino-acid chain: Adenylate kinase (221 aa).

Position 10-15 (10-15 (GAGKGT)) interacts with ATP. The segment at 30–59 (STGDMLRAAVKAGTPLGVEAKKVMDAGGLV) is NMP. AMP is bound by residues Thr-31, Arg-36, 57-59 (GLV), 85-88 (GFPR), and Gln-92. An LID region spans residues 122–159 (GRRVHVASGRTYHVKYNPPKTEGVDDETGEALIQRDDD). Residues Arg-123 and 132-133 (TY) each bind ATP. AMP contacts are provided by Arg-156 and Arg-167. ATP is bound at residue Gly-207.

The protein belongs to the adenylate kinase family. As to quaternary structure, monomer.

The protein resides in the cytoplasm. The catalysed reaction is AMP + ATP = 2 ADP. It participates in purine metabolism; AMP biosynthesis via salvage pathway; AMP from ADP: step 1/1. Its function is as follows. Catalyzes the reversible transfer of the terminal phosphate group between ATP and AMP. Plays an important role in cellular energy homeostasis and in adenine nucleotide metabolism. This chain is Adenylate kinase, found in Cupriavidus necator (strain ATCC 17699 / DSM 428 / KCTC 22496 / NCIMB 10442 / H16 / Stanier 337) (Ralstonia eutropha).